The primary structure comprises 330 residues: tRNA U34 carboxymethyltransferase (330 aa).

Carboxy-S-adenosyl-L-methionine contacts are provided by residues Lys91, Trp105, Lys110, Gly130, 152–154 (DPS), 181–182 (IE), Met196, Tyr200, and Arg315.

Belongs to the class I-like SAM-binding methyltransferase superfamily. CmoB family. Homotetramer.

It catalyses the reaction carboxy-S-adenosyl-L-methionine + 5-hydroxyuridine(34) in tRNA = 5-carboxymethoxyuridine(34) in tRNA + S-adenosyl-L-homocysteine + H(+). Catalyzes carboxymethyl transfer from carboxy-S-adenosyl-L-methionine (Cx-SAM) to 5-hydroxyuridine (ho5U) to form 5-carboxymethoxyuridine (cmo5U) at position 34 in tRNAs. The protein is tRNA U34 carboxymethyltransferase of Shewanella frigidimarina (strain NCIMB 400).